The chain runs to 399 residues: F-box protein At1g30790 (399 aa).

The F-box domain occupies 3–49; that stretch reads RQEIDHIPFDLTVEILTRLPAKSLMKFKCVSKLWSSIIHNQSFIDSF.

The chain is F-box protein At1g30790 from Arabidopsis thaliana (Mouse-ear cress).